A 397-amino-acid chain; its full sequence is uncharacterized protein (397 aa).

The next 10 helical transmembrane spans lie at 2–24 (LNLL…PGIH), 44–66 (YIPF…SAFL), 92–114 (AIVL…SLFL), 124–143 (AFYC…FILY), 150–169 (SVWE…AVLY), 173–195 (AFNI…INNL), 255–277 (FIVS…VIFI), 297–319 (INTA…LNLS), 331–350 (FKFL…IIGS), and 354–373 (YLIY…LLAV).

It is found in the cell membrane. This is an uncharacterized protein from Methanocaldococcus jannaschii (strain ATCC 43067 / DSM 2661 / JAL-1 / JCM 10045 / NBRC 100440) (Methanococcus jannaschii).